We begin with the raw amino-acid sequence, 689 residues long: Glycine--tRNA ligase beta subunit (689 aa).

This sequence belongs to the class-II aminoacyl-tRNA synthetase family. Tetramer of two alpha and two beta subunits.

It is found in the cytoplasm. It carries out the reaction tRNA(Gly) + glycine + ATP = glycyl-tRNA(Gly) + AMP + diphosphate. The protein is Glycine--tRNA ligase beta subunit of Klebsiella pneumoniae (strain 342).